Consider the following 377-residue polypeptide: Delta(12) fatty acid desaturase DES8.11 (377 aa).

Transmembrane regions (helical) follow at residues 55–75 (LIVAYVFYYLANTYIPLIPTP) and 79–99 (LAWPVYWFCQASILTGLWVIG). The short motif at 100–104 (HECGH) is the Histidine box-1 element. A helical transmembrane segment spans residues 112–132 (LIDDIVGFVLHSALLTPYFSW). Residues 136–140 (HRNHH) carry the Histidine box-2 motif. The next 3 helical transmembrane spans lie at 174–194 (VFTLVFRLTLGFPLYLLTNIS), 220–240 (VLLSDFGLLAVFYAIKLLVAA), and 244–264 (AWVINMYAIPVLGVSVFFVLI). The Histidine box-3 motif lies at 310–314 (HVLHH).

Belongs to the fatty acid desaturase type 1 family.

Its subcellular location is the membrane. It functions in the pathway lipid metabolism; polyunsaturated fatty acid biosynthesis. Functionally, converts linoleic acid into a conjugated octadecatrienoic acid, probably calendic acid. The protein is Delta(12) fatty acid desaturase DES8.11 of Calendula officinalis (Pot marigold).